Reading from the N-terminus, the 421-residue chain is 4-hydroxy-3-methylbut-2-en-1-yl diphosphate synthase (flavodoxin) (421 aa).

Residues 1-20 form a disordered region; the sequence is MHDAVTRPTPPSDATSWPRR. Residues Cys-311, Cys-314, Cys-357, and Glu-364 each coordinate [4Fe-4S] cluster.

It belongs to the IspG family. [4Fe-4S] cluster serves as cofactor.

The catalysed reaction is (2E)-4-hydroxy-3-methylbut-2-enyl diphosphate + oxidized [flavodoxin] + H2O + 2 H(+) = 2-C-methyl-D-erythritol 2,4-cyclic diphosphate + reduced [flavodoxin]. Its pathway is isoprenoid biosynthesis; isopentenyl diphosphate biosynthesis via DXP pathway; isopentenyl diphosphate from 1-deoxy-D-xylulose 5-phosphate: step 5/6. Its function is as follows. Converts 2C-methyl-D-erythritol 2,4-cyclodiphosphate (ME-2,4cPP) into 1-hydroxy-2-methyl-2-(E)-butenyl 4-diphosphate. In Stenotrophomonas maltophilia (strain R551-3), this protein is 4-hydroxy-3-methylbut-2-en-1-yl diphosphate synthase (flavodoxin).